The sequence spans 461 residues: Bifunctional protein GlmU (461 aa).

A pyrophosphorylase region spans residues methionine 1–arginine 235. UDP-N-acetyl-alpha-D-glucosamine-binding positions include leucine 6–glycine 9, lysine 20, glutamine 71, and glycine 77–threonine 78. A Mg(2+)-binding site is contributed by aspartate 102. UDP-N-acetyl-alpha-D-glucosamine contacts are provided by glycine 145, glutamate 160, asparagine 175, and asparagine 233. Residue asparagine 233 coordinates Mg(2+). Residues tryptophan 236–serine 256 form a linker region. An N-acetyltransferase region spans residues glycine 257–glutamate 461. UDP-N-acetyl-alpha-D-glucosamine contacts are provided by arginine 339 and lysine 357. Histidine 369 (proton acceptor) is an active-site residue. UDP-N-acetyl-alpha-D-glucosamine contacts are provided by tyrosine 372 and asparagine 383. Positions 386, 411, 429, and 446 each coordinate acetyl-CoA.

The protein in the N-terminal section; belongs to the N-acetylglucosamine-1-phosphate uridyltransferase family. In the C-terminal section; belongs to the transferase hexapeptide repeat family. Homotrimer. Requires Mg(2+) as cofactor.

The protein resides in the cytoplasm. The enzyme catalyses alpha-D-glucosamine 1-phosphate + acetyl-CoA = N-acetyl-alpha-D-glucosamine 1-phosphate + CoA + H(+). It carries out the reaction N-acetyl-alpha-D-glucosamine 1-phosphate + UTP + H(+) = UDP-N-acetyl-alpha-D-glucosamine + diphosphate. It participates in nucleotide-sugar biosynthesis; UDP-N-acetyl-alpha-D-glucosamine biosynthesis; N-acetyl-alpha-D-glucosamine 1-phosphate from alpha-D-glucosamine 6-phosphate (route II): step 2/2. The protein operates within nucleotide-sugar biosynthesis; UDP-N-acetyl-alpha-D-glucosamine biosynthesis; UDP-N-acetyl-alpha-D-glucosamine from N-acetyl-alpha-D-glucosamine 1-phosphate: step 1/1. Its pathway is bacterial outer membrane biogenesis; LPS lipid A biosynthesis. Functionally, catalyzes the last two sequential reactions in the de novo biosynthetic pathway for UDP-N-acetylglucosamine (UDP-GlcNAc). The C-terminal domain catalyzes the transfer of acetyl group from acetyl coenzyme A to glucosamine-1-phosphate (GlcN-1-P) to produce N-acetylglucosamine-1-phosphate (GlcNAc-1-P), which is converted into UDP-GlcNAc by the transfer of uridine 5-monophosphate (from uridine 5-triphosphate), a reaction catalyzed by the N-terminal domain. This Hydrogenobaculum sp. (strain Y04AAS1) protein is Bifunctional protein GlmU.